We begin with the raw amino-acid sequence, 420 residues long: 4-hydroxy-3-methylbut-2-en-1-yl diphosphate synthase (flavodoxin) (420 aa).

The [4Fe-4S] cluster site is built by C307, C310, C353, and E360.

It belongs to the IspG family. The cofactor is [4Fe-4S] cluster.

It carries out the reaction (2E)-4-hydroxy-3-methylbut-2-enyl diphosphate + oxidized [flavodoxin] + H2O + 2 H(+) = 2-C-methyl-D-erythritol 2,4-cyclic diphosphate + reduced [flavodoxin]. The protein operates within isoprenoid biosynthesis; isopentenyl diphosphate biosynthesis via DXP pathway; isopentenyl diphosphate from 1-deoxy-D-xylulose 5-phosphate: step 5/6. Functionally, converts 2C-methyl-D-erythritol 2,4-cyclodiphosphate (ME-2,4cPP) into 1-hydroxy-2-methyl-2-(E)-butenyl 4-diphosphate. The polypeptide is 4-hydroxy-3-methylbut-2-en-1-yl diphosphate synthase (flavodoxin) (Brucella suis (strain ATCC 23445 / NCTC 10510)).